We begin with the raw amino-acid sequence, 64 residues long: Neurotoxin lambda-MeuTx (64 aa).

An N-terminal signal peptide occupies residues 1–18; the sequence is MSTFIVVFLLLTAILCHA. Residues 19–27 constitute a propeptide that is removed on maturation; it reads EHAIDETAR. Disulfide bonds link cysteine 29-cysteine 43, cysteine 36-cysteine 49, and cysteine 42-cysteine 58.

This sequence belongs to the scorpion calcin-like family. Expressed by the venom gland.

The protein localises to the secreted. Voltage-gated potassium channel (Kv) inhibitor. In addition it may increase intracellular calcium release through the activation of nuclear inositol 1,4,5-trisphosphate receptors (ITPR) of cardiomyocytes, thereby causing an increase in the contraction frequency of these cells. The sequence is that of Neurotoxin lambda-MeuTx from Mesobuthus eupeus (Lesser Asian scorpion).